A 470-amino-acid polypeptide reads, in one-letter code: E3 ubiquitin-protein ligase TRIM21 (470 aa).

The RING-type zinc-finger motif lies at 20 to 59; it reads CSICLDPMVEPMSIECGHCFCKECIFEVGKNGGSSCPECR. Zn(2+) is bound by residues cysteine 96, histidine 99, cysteine 118, and histidine 124. The segment at 96 to 127 adopts a B box-type zinc-finger fold; sequence CMKHGEKLHLFCEEDGQALCWVCAQSGKHRDH. Positions 188-250 form a coiled coil; that stretch reads LQNSLLAQEE…RGSELELLQE (63 aa). Residues 272–470 form the B30.2/SPRY domain; sequence DLTSTCPVPG…APLKLCPLKM (199 aa).

This sequence belongs to the TRIM/RBCC family. Homotrimer. Component of a SCF(SKP2)-like complex containing CUL1, SKP1, TRIM21 and SKP2. Interacts with CALR, CUL1, FBXW11, HSPA5, IKBKB, IRF3, SKP1 and VCP. Interacts with SKP2; the interaction with SKP2 does not depend on an intact F-box domain. Interacts (via N-terminus and C-terminus) with DCP2 (via N-terminus and C-terminus). Interacts (via C-terminus) with IRF8 (via C-terminus). Interacts with ULK1, BECN1 and with ATG8 family members, including GABARAP, GABARAPL1, GABARAPL2 and MAP1LC3C/LC3C. Interacts with TRIM21 and SQSTM1/sequestosome 1. Interacts with IRF3. Interacts (via the SPRY domain) with NMI (via coiled-coil domain); the interaction promotes 'Lys-63'-linked ubiquitination of NMI. Interacts with IFI35 and NMI; the interaction facilitates NMI-IFI35 complex formation. In terms of processing, autoubiquitinated; does not lead to its proteasomal degradation. Deubiquitinated by USP4; leading to its stabilization. Autoubiquitinated.

It is found in the cytoplasm. Its subcellular location is the cytoplasmic vesicle. The protein resides in the autophagosome. It localises to the nucleus. The protein localises to the P-body. It is found in the stress granule. It carries out the reaction S-ubiquitinyl-[E2 ubiquitin-conjugating enzyme]-L-cysteine + [acceptor protein]-L-lysine = [E2 ubiquitin-conjugating enzyme]-L-cysteine + N(6)-ubiquitinyl-[acceptor protein]-L-lysine.. It participates in protein modification; protein ubiquitination. E3 ubiquitin-protein ligase whose activity is dependent on E2 enzymes, UBE2D1, UBE2D2, UBE2E1 and UBE2E2. Forms a ubiquitin ligase complex in cooperation with the E2 UBE2D2 that is used not only for the ubiquitination of USP4 and IKBKB but also for its self-ubiquitination. Component of cullin-RING-based SCF (SKP1-CUL1-F-box protein) E3 ubiquitin-protein ligase complexes such as SCF(SKP2)-like complexes. A TRIM21-containing SCF(SKP2)-like complex is shown to mediate ubiquitination of CDKN1B ('Thr-187' phosphorylated-form), thereby promoting its degradation by the proteasome. Monoubiquitinates IKBKB that will negatively regulates Tax-induced NF-kappa-B signaling. Negatively regulates IFN-beta production post-pathogen recognition by catalyzing polyubiquitin-mediated degradation of IRF3. Mediates the ubiquitin-mediated proteasomal degradation of IgG1 heavy chain, which is linked to the VCP-mediated ER-associated degradation (ERAD) pathway. Promotes IRF8 ubiquitination, which enhanced the ability of IRF8 to stimulate cytokine genes transcription in macrophages. Plays a role in the regulation of the cell cycle progression. Enhances the decapping activity of DCP2. Exists as a ribonucleoprotein particle present in all mammalian cells studied and composed of a single polypeptide and one of four small RNA molecules. At least two isoforms are present in nucleated and red blood cells, and tissue specific differences in RO/SSA proteins have been identified. The common feature of these proteins is their ability to bind HY RNAs.2. Involved in the regulation of innate immunity and the inflammatory response in response to IFNG/IFN-gamma. Organizes autophagic machinery by serving as a platform for the assembly of ULK1, Beclin 1/BECN1 and ATG8 family members and recognizes specific autophagy targets, thus coordinating target recognition with assembly of the autophagic apparatus and initiation of autophagy. Also regulates autophagy through FIP200/RB1CC1 ubiquitination and subsequent decreased protein stability. Represses the innate antiviral response by facilitating the formation of the NMI-IFI35 complex through 'Lys-63'-linked ubiquitination of NMI. During viral infection, promotes cell pyroptosis by mediating 'Lys-6'-linked ubiquitination of ISG12a/IFI27, facilitating its translocation into the mitochondria and subsequent CASP3 activation. When up-regulated through the IFN/JAK/STAT signaling pathway, promotes 'Lys-27'-linked ubiquitination of MAVS, leading to the recruitment of TBK1 and up-regulation of innate immunity. Mediates 'Lys-63'-linked polyubiquitination of G3BP1 in response to heat shock, leading to stress granule disassembly. The sequence is that of E3 ubiquitin-protein ligase TRIM21 (Trim21) from Mus musculus (Mouse).